A 583-amino-acid polypeptide reads, in one-letter code: Arginine--tRNA ligase (583 aa).

Residues A131–H141 carry the 'HIGH' region motif.

It belongs to the class-I aminoacyl-tRNA synthetase family. As to quaternary structure, monomer.

It localises to the cytoplasm. The enzyme catalyses tRNA(Arg) + L-arginine + ATP = L-arginyl-tRNA(Arg) + AMP + diphosphate. In Parvibaculum lavamentivorans (strain DS-1 / DSM 13023 / NCIMB 13966), this protein is Arginine--tRNA ligase.